Consider the following 1942-residue polypeptide: MEDRRAEKSCEQACESLKRQDYEMALKHCTEALLSLGQYSMADFTGPCPLEIERIKIESLLYRIASFLQLKNYVQADEDCRHVLGEGLAKGEDAFRAVLCCMQLKGKLQPVSTILAKSLTGESLNGMVTKDLTRLKTLLSETETATSNALSGYHVEDLDEGSCNGWHFRPPPRGITSSEEYTLCKRFLEQGICRYGAQCTSAHSQEELAEWQKRYASRLIKLKQQNENKQLSGSYMETLIEKWMNSLSPEKVLSECIEGVKVEHNPDLSVTVSTKKSHQTWTFALTCKPARMLYRVALLYDAHRPHFSIIAISAGDSTTQVSQEVPENCQEWIGGKMAQNGLDHYVYKVGIAFNTEIFGTFRQTIVFDFGLEPVLMQRVMIDAASTEDLEYLMHAKQQLVTTAKRWDSSSKTIIDFEPNETTDLEKSLLIRYQIPLSADQLFTQSVLDKSLTKSNYQSRLHDLLYIEEIAQYKEISKFNLKVQLQILASFMLTGVSGGAKYAQNGQLFGRFKLTETLSEDTLAGRLVMTKVNAVYLLPVPKQKLVQTQGTKEKVYEATIEEKTKEYIFLRLSRECCEELNLRPDCDTQVELQFQLNRLPLCEMHYALDRIKDNGVLFPDISMTPTIPWSPNRQWDEQLDPRLNAKQKEAVLAITTPLAIQLPPVLIIGPYGTGKTFTLAQAVKHILQQQETRILICTHSNSAADLYIKDYLHPYVEAGNPQARPLRVYFRNRWVKTVHPVVHQYCLISSAHSTFQMPQKEDILKHRVVVVTLNTSQYLCQLDLEPGFFTHILLDEAAQAMECETIMPLALATQNTRIVLAGDHMQLSPFVYSEFARERNLHVSLLDRLYEHYPAEFPCRILLCENYRSHEAIINYTSELFYEGKLMASGKQPAHKDFYPLTFFTARGEDVQEKNSTAFYNNAEVFEVVERVEELRRKWPVAWGKLDDGSIGVVTPYADQVFRIRAELRKKRLSDVNVERVLNVQGKQFRVLFLSTVRTRHTCKHKQTPIKKKEQLLEDSTEDLDYGFLSNYKLLNTAITRAQSLVAVVGDPIALCSIGRCRKFWERFIALCHENSSLHGITFEQIKAQLEALELKKTYVLNPLAPEFIPRALRLQHSGSTNKQQQSPPKGKSLHHTQNDHFQNDGIVQPNPSVLIGNPIRAYTPPPPLGPHPNLGKSPSPVQRIDPHTGTSILYVPAVYGGNVVMSVPLPVPWTGYQGRFAVDPRIITHQAAMAYNMNLLQTHGRGSPIPYGLGHHPPVTIGQPQNQHQEKDQHEQNRNGKSDTNNSGPEINKIRTPEKKPTEPKQVDLESNPQNRSPESRPSVVYPSTKFPRKDNLNPRHINLPLPAPHAQYAIPNRHFHPLPQLPRPPFPIPQQHTLLNQQQNNLPEQPNQIPPQPNQVVQQQSQLNQQPQQPPPQLSPAYQAGPNNAFFNSAVAHRPQSPPAEAVIPEQQPPPMLQEGHSPLRAIAQPGPILPSHLNSFIDENPSGLPIGEALDRIHGSVALETLRQQQARFQQWSEHHAFLSQGSAPYPHHHHPHLQHLPQPPLGLHQPPVRADWKLTSSAEDEVETTYSRFQDLIRELSHRDQSETRELAEMPPPQSRLLQYRQVQSRSPPAVPSPPSSTDHSSHFSNFNDNSRDIEVASNPAFPQRLPPQIFNSPFSLPSEHLAPPPLKYLAPDGAWTFANLQQNHLMGPGFPYGLPPLPHRPPQNPFVQIQNHQHAIGQEPFHPLSSRTVSSSSLPSLEEYEPRGPGRPLYQRRISSSSVQPCSEEVSTPQDSLAQCKELQDHSNQSSFNFSSPESWVNTTSSTPYQNIPCNGSSRTAQPRELIAPPKTVKPPEDQLKSENLEVSSSFNYSVLQHLGQFPPLMPNKQIAESANSSSPQSSAGGKPAMSYASALRAPPKPRPPPEQAKKSSDPLSLFQELSLGSSSGSNGFYSYFK.

The C3H1-type zinc-finger motif lies at 178–206; it reads SEEYTLCKRFLEQGICRYGAQCTSAHSQE. Residue Ser-248 is modified to Phosphoserine. 668 to 675 is a binding site for ATP; that stretch reads GPYGTGKT. The DEAA box signature appears at 794-797; sequence DEAA. Positions 1117–1127 are enriched in polar residues; sequence SGSTNKQQQSP. The disordered stretch occupies residues 1117–1141; sequence SGSTNKQQQSPPKGKSLHHTQNDHF. Thr-1163 carries the post-translational modification Phosphothreonine. Arg-1245 carries the post-translational modification Omega-N-methylarginine. 4 disordered regions span residues 1246–1345, 1386–1429, 1527–1552, and 1608–1637; these read GSPI…INLP, NLPE…GPNN, QGSA…GLHQ, and RQVQ…FNDN. Composition is skewed to basic and acidic residues over residues 1268 to 1281 and 1292 to 1308; these read HQEK…RNGK and NKIR…KQVD. Low complexity predominate over residues 1399 to 1412; it reads NQVVQQQSQLNQQP. Ser-1614 bears the Phosphoserine mark. The span at 1623-1636 shows a compositional bias: low complexity; that stretch reads SSTDHSSHFSNFND. Residues Ser-1645, Ser-1738, Ser-1741, and Ser-1766 each carry the phosphoserine modification. Disordered regions lie at residues 1729-1779, 1792-1843, and 1870-1942; these read FHPL…TPQD, NQSS…PEDQ, and MPNK…SYFK. Low complexity predominate over residues 1731-1745; the sequence is PLSSRTVSSSSLPSL. 2 stretches are compositionally biased toward polar residues: residues 1761–1779 and 1792–1825; these read RISS…TPQD and NQSS…SRTA. Low complexity-rich tracts occupy residues 1876–1888 and 1920–1942; these read AESA…QSSA and LSLF…SYFK.

Belongs to the DNA2/NAM7 helicase family. As to quaternary structure, interacts with SMYD2. Interacts with POLR2A. Interacts with SMYD3; the interaction may bridge SMYD3 and RNA polymerase II. Expressed predominantly in thymus and brain. Expression is down-regulated in 28 of 95 tested cancer cell lines.

It is found in the nucleus. Functionally, may act as a helicase that plays a role in RNA metabolism in multiple tissues and organs within the developing embryo. The chain is Probable helicase with zinc finger domain (HELZ) from Homo sapiens (Human).